We begin with the raw amino-acid sequence, 347 residues long: Holliday junction branch migration complex subunit RuvB (347 aa).

Polar residues predominate over residues 1 to 10; the sequence is MAIVSSSSGR. Positions 1-29 are disordered; the sequence is MAIVSSSSGRKSPCRETALVDPQPAPEEQ. A large ATPase domain (RuvB-L) region spans residues 13–198; sequence PCRETALVDP…FGLIQRLEFY (186 aa). Positions 37, 38, 79, 82, 83, 84, 188, 198, and 235 each coordinate ATP. Threonine 83 serves as a coordination point for Mg(2+). The segment at 199–270 is small ATPAse domain (RuvB-S); it reads GQTDLEAIVA…MVAEALSLHR (72 aa). The tract at residues 273–347 is head domain (RuvB-H); that stretch reads HRGLDASDRR…AARSHIAEAA (75 aa). DNA contacts are provided by arginine 328 and arginine 333.

It belongs to the RuvB family. As to quaternary structure, homohexamer. Forms an RuvA(8)-RuvB(12)-Holliday junction (HJ) complex. HJ DNA is sandwiched between 2 RuvA tetramers; dsDNA enters through RuvA and exits via RuvB. An RuvB hexamer assembles on each DNA strand where it exits the tetramer. Each RuvB hexamer is contacted by two RuvA subunits (via domain III) on 2 adjacent RuvB subunits; this complex drives branch migration. In the full resolvosome a probable DNA-RuvA(4)-RuvB(12)-RuvC(2) complex forms which resolves the HJ.

Its subcellular location is the cytoplasm. The enzyme catalyses ATP + H2O = ADP + phosphate + H(+). In terms of biological role, the RuvA-RuvB-RuvC complex processes Holliday junction (HJ) DNA during genetic recombination and DNA repair, while the RuvA-RuvB complex plays an important role in the rescue of blocked DNA replication forks via replication fork reversal (RFR). RuvA specifically binds to HJ cruciform DNA, conferring on it an open structure. The RuvB hexamer acts as an ATP-dependent pump, pulling dsDNA into and through the RuvAB complex. RuvB forms 2 homohexamers on either side of HJ DNA bound by 1 or 2 RuvA tetramers; 4 subunits per hexamer contact DNA at a time. Coordinated motions by a converter formed by DNA-disengaged RuvB subunits stimulates ATP hydrolysis and nucleotide exchange. Immobilization of the converter enables RuvB to convert the ATP-contained energy into a lever motion, pulling 2 nucleotides of DNA out of the RuvA tetramer per ATP hydrolyzed, thus driving DNA branch migration. The RuvB motors rotate together with the DNA substrate, which together with the progressing nucleotide cycle form the mechanistic basis for DNA recombination by continuous HJ branch migration. Branch migration allows RuvC to scan DNA until it finds its consensus sequence, where it cleaves and resolves cruciform DNA. The sequence is that of Holliday junction branch migration complex subunit RuvB from Synechococcus sp. (strain CC9902).